Consider the following 77-residue polypeptide: Acyl carrier protein (77 aa).

The 76-residue stretch at 2 to 77 (STVEERVKKI…DAIDYIVAHT (76 aa)) folds into the Carrier domain. Residue Ser-37 is modified to O-(pantetheine 4'-phosphoryl)serine.

This sequence belongs to the acyl carrier protein (ACP) family. 4'-phosphopantetheine is transferred from CoA to a specific serine of apo-ACP by AcpS. This modification is essential for activity because fatty acids are bound in thioester linkage to the sulfhydryl of the prosthetic group.

It localises to the cytoplasm. It participates in lipid metabolism; fatty acid biosynthesis. In terms of biological role, carrier of the growing fatty acid chain in fatty acid biosynthesis. This chain is Acyl carrier protein, found in Marinobacter nauticus (strain ATCC 700491 / DSM 11845 / VT8) (Marinobacter aquaeolei).